Here is a 495-residue protein sequence, read N- to C-terminus: Probable leucine aminopeptidase 2 (495 aa).

The N-terminal stretch at methionine 1–glycine 21 is a signal peptide. The 87-residue stretch at methionine 130–threonine 216 folds into the PA domain. N-linked (GlcNAc...) asparagine glycosylation is found at asparagine 142 and asparagine 235. Zn(2+)-binding residues include histidine 259 and aspartate 271. The N-linked (GlcNAc...) asparagine glycan is linked to asparagine 272. Glutamate 303 (proton acceptor) is an active-site residue. Zn(2+)-binding residues include glutamate 304 and aspartate 332. A glycan (N-linked (GlcNAc...) asparagine) is linked at asparagine 352. Histidine 430 contributes to the Zn(2+) binding site.

It belongs to the peptidase M28 family. M28A subfamily. Monomer. It depends on Zn(2+) as a cofactor.

It localises to the secreted. Functionally, extracellular aminopeptidase that releases a wide variety of amino acids from natural peptides and contributes to pathogenicity. This is Probable leucine aminopeptidase 2 (LAP2) from Trichophyton verrucosum (strain HKI 0517).